The primary structure comprises 119 residues: UPF0102 protein Pmen_0910 (119 aa).

This sequence belongs to the UPF0102 family.

This chain is UPF0102 protein Pmen_0910, found in Ectopseudomonas mendocina (strain ymp) (Pseudomonas mendocina).